The sequence spans 731 residues: 1,4-alpha-glucan branching enzyme GlgB (731 aa).

D408 serves as the catalytic Nucleophile. The Proton donor role is filled by E461.

Belongs to the glycosyl hydrolase 13 family. GlgB subfamily. Monomer.

The enzyme catalyses Transfers a segment of a (1-&gt;4)-alpha-D-glucan chain to a primary hydroxy group in a similar glucan chain.. It functions in the pathway glycan biosynthesis; glycogen biosynthesis. Catalyzes the formation of the alpha-1,6-glucosidic linkages in glycogen by scission of a 1,4-alpha-linked oligosaccharide from growing alpha-1,4-glucan chains and the subsequent attachment of the oligosaccharide to the alpha-1,6 position. This Corynebacterium efficiens (strain DSM 44549 / YS-314 / AJ 12310 / JCM 11189 / NBRC 100395) protein is 1,4-alpha-glucan branching enzyme GlgB.